Reading from the N-terminus, the 177-residue chain is SsrA-binding protein (177 aa).

2 disordered regions span residues 1 to 23 (MYVP…KDGK) and 148 to 177 (YDKR…QRGE). Positions 148–165 (YDKRQTLREKQDRRESDR) are enriched in basic and acidic residues.

Belongs to the SmpB family.

It is found in the cytoplasm. Its function is as follows. Required for rescue of stalled ribosomes mediated by trans-translation. Binds to transfer-messenger RNA (tmRNA), required for stable association of tmRNA with ribosomes. tmRNA and SmpB together mimic tRNA shape, replacing the anticodon stem-loop with SmpB. tmRNA is encoded by the ssrA gene; the 2 termini fold to resemble tRNA(Ala) and it encodes a 'tag peptide', a short internal open reading frame. During trans-translation Ala-aminoacylated tmRNA acts like a tRNA, entering the A-site of stalled ribosomes, displacing the stalled mRNA. The ribosome then switches to translate the ORF on the tmRNA; the nascent peptide is terminated with the 'tag peptide' encoded by the tmRNA and targeted for degradation. The ribosome is freed to recommence translation, which seems to be the essential function of trans-translation. The sequence is that of SsrA-binding protein from Streptomyces avermitilis (strain ATCC 31267 / DSM 46492 / JCM 5070 / NBRC 14893 / NCIMB 12804 / NRRL 8165 / MA-4680).